The primary structure comprises 425 residues: Serine--tRNA ligase (425 aa).

T233–E235 is a binding site for L-serine. An ATP-binding site is contributed by R264 to E266. E287 provides a ligand contact to L-serine. Residue E351–S354 coordinates ATP. S385 provides a ligand contact to L-serine.

Belongs to the class-II aminoacyl-tRNA synthetase family. Type-1 seryl-tRNA synthetase subfamily. As to quaternary structure, homodimer. The tRNA molecule binds across the dimer.

The protein resides in the cytoplasm. It carries out the reaction tRNA(Ser) + L-serine + ATP = L-seryl-tRNA(Ser) + AMP + diphosphate + H(+). The enzyme catalyses tRNA(Sec) + L-serine + ATP = L-seryl-tRNA(Sec) + AMP + diphosphate + H(+). It functions in the pathway aminoacyl-tRNA biosynthesis; selenocysteinyl-tRNA(Sec) biosynthesis; L-seryl-tRNA(Sec) from L-serine and tRNA(Sec): step 1/1. Functionally, catalyzes the attachment of serine to tRNA(Ser). Is also able to aminoacylate tRNA(Sec) with serine, to form the misacylated tRNA L-seryl-tRNA(Sec), which will be further converted into selenocysteinyl-tRNA(Sec). This chain is Serine--tRNA ligase, found in Prochlorococcus marinus (strain MIT 9215).